Reading from the N-terminus, the 432-residue chain is Fibroleukin (432 aa).

Positions 1-19 are cleaved as a signal peptide; the sequence is MRLPGWLWLSSAVLAACRA. An N-linked (GlcNAc...) asparagine glycan is attached at asparagine 24. Positions 71-157 form a coiled coil; the sequence is GSMEEVLKEV…QGRLETLHLV (87 aa). Residues 100–122 are disordered; the sequence is QADDHRDPGGNGGNGAETAEDSR. 4 N-linked (GlcNAc...) asparagine glycosylation sites follow: asparagine 172, asparagine 228, asparagine 256, and asparagine 329. Residues 197 to 429 form the Fibrinogen C-terminal domain; sequence PVQHLIYKDC…QAKMMIRPKN (233 aa). Cysteine 206 and cysteine 235 are joined by a disulfide. Cysteine 364 and cysteine 377 are joined by a disulfide.

Homotetramer; disulfide-linked. As to expression, constitutively expressed in cytotoxic T-cells.

It localises to the secreted. In terms of biological role, converts prothrombin to thrombin. In Mus musculus (Mouse), this protein is Fibroleukin (Fgl2).